We begin with the raw amino-acid sequence, 158 residues long: MNSSNIRRIQNEYNKINNDKNLYADSFQINMVDENIFLWKVNIKGPENSLYENYNFELEIELSNDYPYSSPKVKFITPIQHMNVNDKGDICLNILKKDGWNASLNIISIIWSIIVLLDQPNPEDPFNSELASLYRNDKLSYDKKIRDYCKTHSKLWTF.

Positions 4–154 (SNIRRIQNEY…IRDYCKTHSK (151 aa)) constitute a UBC core domain. The active-site Glycyl thioester intermediate is the Cys91.

This sequence belongs to the ubiquitin-conjugating enzyme family.

It catalyses the reaction S-ubiquitinyl-[E1 ubiquitin-activating enzyme]-L-cysteine + [E2 ubiquitin-conjugating enzyme]-L-cysteine = [E1 ubiquitin-activating enzyme]-L-cysteine + S-ubiquitinyl-[E2 ubiquitin-conjugating enzyme]-L-cysteine.. The protein operates within protein modification; protein ubiquitination. In terms of biological role, catalyzes the covalent attachment of ubiquitin to other proteins. The polypeptide is Probable ubiquitin-conjugating enzyme E2 L460 (UBC) (Acanthamoeba polyphaga (Amoeba)).